We begin with the raw amino-acid sequence, 1104 residues long: Lon protease homolog, mitochondrial (1104 aa).

Residues 1–58 (MLPLRAFARLAQRPRLSRPTQLARSSLPRPSPSRPAAHYLALAPAPSTRFLHSSPPVL) constitute a mitochondrion transit peptide. The interval 8–144 (ARLAQRPRLS…PGAGGPKEVA (137 aa)) is disordered. Over residues 22-46 (LARSSLPRPSPSRPAAHYLALAPAP) the composition is skewed to low complexity. The span at 80–103 (KQDDQVEKPLPDAESSKSAEERAK) shows a compositional bias: basic and acidic residues. The span at 104 to 128 (SQSSKPDIKASSSDSVSSSAPAPGS) shows a compositional bias: low complexity. Gly residues predominate over residues 129 to 139 (ADGGSPPGAGG). Residues 155–444 (VLAIPITHRP…RALVLLKKEL (290 aa)) form the Lon N-terminal domain. 597 to 604 (GPPGVGKT) contacts ATP. The Lon proteolytic domain maps to 895-1082 (SPPAGVSTGL…RQVLHEAFRG (188 aa)). Residues Ser987 and Lys1030 contribute to the active site.

The protein belongs to the peptidase S16 family. Homohexamer or homoheptamer. Organized in a ring with a central cavity.

Its subcellular location is the mitochondrion matrix. It carries out the reaction Hydrolysis of proteins in presence of ATP.. In terms of biological role, ATP-dependent serine protease that mediates the selective degradation of misfolded, unassembled or oxidatively damaged polypeptides as well as certain short-lived regulatory proteins in the mitochondrial matrix. May also have a chaperone function in the assembly of inner membrane protein complexes. Participates in the regulation of mitochondrial gene expression and in the maintenance of the integrity of the mitochondrial genome. Binds to mitochondrial DNA in a site-specific manner. This chain is Lon protease homolog, mitochondrial, found in Cryptococcus neoformans var. neoformans serotype D (strain B-3501A) (Filobasidiella neoformans).